The chain runs to 42 residues: MDFDTIMEKAYEEYFEGLAEGEEALSFSEFKQALSSSAKSNG.

Its subcellular location is the cytoplasm. This is an uncharacterized protein from Escherichia coli (strain K12).